Here is a 101-residue protein sequence, read N- to C-terminus: Small ribosomal subunit protein uS14 (101 aa).

This sequence belongs to the universal ribosomal protein uS14 family. Part of the 30S ribosomal subunit. Contacts proteins S3 and S10.

Its function is as follows. Binds 16S rRNA, required for the assembly of 30S particles and may also be responsible for determining the conformation of the 16S rRNA at the A site. The polypeptide is Small ribosomal subunit protein uS14 (Cereibacter sphaeroides (strain ATCC 17029 / ATH 2.4.9) (Rhodobacter sphaeroides)).